A 277-amino-acid chain; its full sequence is Shikimate dehydrogenase (NADP(+)) (277 aa).

Shikimate contacts are provided by residues 15–17 (SLS) and Thr62. The Proton acceptor role is filled by Lys66. Shikimate-binding residues include Asn87 and Asp102. NADP(+) is bound by residues 127-131 (GAGGA), 151-156 (NRTVDK), and Ile219. A shikimate-binding site is contributed by Tyr221. An NADP(+)-binding site is contributed by Gly242.

Belongs to the shikimate dehydrogenase family. In terms of assembly, homodimer.

It carries out the reaction shikimate + NADP(+) = 3-dehydroshikimate + NADPH + H(+). The protein operates within metabolic intermediate biosynthesis; chorismate biosynthesis; chorismate from D-erythrose 4-phosphate and phosphoenolpyruvate: step 4/7. Functionally, involved in the biosynthesis of the chorismate, which leads to the biosynthesis of aromatic amino acids. Catalyzes the reversible NADPH linked reduction of 3-dehydroshikimate (DHSA) to yield shikimate (SA). This chain is Shikimate dehydrogenase (NADP(+)), found in Bacillus cereus (strain 03BB102).